Consider the following 590-residue polypeptide: Multidrug and toxin extrusion protein 1 (590 aa).

Residues 1-59 are Cytoplasmic-facing; it reads MDSITSYNVTQMNGDTKQEKCDDVLSTSSTQKFCGGCRKKLRSLLPVNYKTEIVELLKL. Residues 60 to 80 traverse the membrane as a helical segment; sequence AGPVFISQLMIFLISFVSTVF. The Extracellular segment spans residues 81–88; it reads CGHLGKTE. The helical transmembrane segment at 89 to 109 threads the bilayer; it reads LAGVALAIAVINVTGISIGSG. Topologically, residues 110-137 are cytoplasmic; that stretch reads LASACDTLISQTFGSNNLKRVGVILQRG. A helical membrane pass occupies residues 138 to 158; it reads ILILLLACFPCWALLINTEPI. Over 159-167 the chain is Extracellular; sequence LLAVRQSPN. A helical membrane pass occupies residues 168-188; the sequence is VASLSQLYVKIFMPALPAAFM. The Cytoplasmic portion of the chain corresponds to 189–199; it reads YQLQGRYLQNQ. The chain crosses the membrane as a helical span at residues 200–222; it reads GIIWPQVITGAAGNILNALINYV. The Extracellular portion of the chain corresponds to 223–231; it reads FLHLLELGV. Residues 232–254 traverse the membrane as a helical segment; the sequence is AGSAAANTISQYSLAVFLYVYIR. Topologically, residues 255–274 are cytoplasmic; the sequence is WKNLHKATWDGWSRDCLQEW. The chain crosses the membrane as a helical span at residues 275 to 294; that stretch reads GAFIRLALPSMLMLCVEWWT. Over 295-313 the chain is Extracellular; sequence YEIGGFLAGLISETELGAQ. The chain crosses the membrane as a helical span at residues 314 to 334; it reads SVVYELATIAYMFPLGFAVAA. Residues 335–351 lie on the Cytoplasmic side of the membrane; that stretch reads SVRVGNALGAGNTERAK. The helical transmembrane segment at 352–372 threads the bilayer; sequence LSAKVALVCGVLVSCVVATLI. The Extracellular segment spans residues 373-395; it reads GCTKDVIAYIFTTEEEIVSRVSQ. The helical transmembrane segment at 396 to 416 threads the bilayer; sequence VMIMYGFFHLFDAIAGITGGI. The Cytoplasmic portion of the chain corresponds to 417 to 430; that stretch reads VRGAGKQLLGALCN. The chain crosses the membrane as a helical span at residues 431–451; the sequence is IVGYYFVGFPTGVSLMFALSM. Position 452 (Gly452) is a topological domain, extracellular. A helical membrane pass occupies residues 453–473; that stretch reads IIGLWIGFFGCVFLQSLFFII. The Cytoplasmic portion of the chain corresponds to 474–565; the sequence is LIYKLDWKKA…TTKQLIVRRG (92 aa). The helical transmembrane segment at 566–586 threads the bilayer; it reads LAVLLMVLILAGGIVLNEMLV. The Extracellular portion of the chain corresponds to 587 to 590; sequence RYLR.

This sequence belongs to the multi antimicrobial extrusion (MATE) (TC 2.A.66.1) family.

The protein resides in the cell membrane. Solute transporter for tetraethylammonium (TEA), cimetidine, metformin, guanidine, N-methylnicotinamide (NMN) and also the zwitterionic cephalosporin cephalexin. Responsible for the secretion of cationic drugs across the brush border membranes. The sequence is that of Multidrug and toxin extrusion protein 1 (slc47a1) from Danio rerio (Zebrafish).